The chain runs to 1006 residues: Serine/threonine-protein phosphatase BSL3 (1006 aa).

The disordered stretch occupies residues 1-67 (MDLDSSMVPE…QQQQQPQVTA (67 aa)). Low complexity-rich tracts occupy residues 38-47 (SESESASLTP) and 54-67 (QQQQ…QVTA). 5 Kelch repeats span residues 138–184 (TSAG…VATA), 242–290 (YLMA…TASA), 295–345 (LLLL…VFVN), 351–398 (SGGA…DAAG), and 419–465 (LIFI…TPPG). Disordered stretches follow at residues 454 to 494 (AAAA…LGSP) and 552 to 579 (GEVE…IKPD). Ser-616 carries the phosphoserine modification. Mn(2+) is bound by residues Asp-709, His-711, Asp-743, and Asn-775. His-776 acts as the Proton donor in catalysis. Mn(2+) contacts are provided by His-828 and His-907. Phosphoserine is present on Ser-964. The disordered stretch occupies residues 982-1006 (NVNRPPTPTRGRPQNPNDRGSLAWI).

The protein belongs to the PPP phosphatase family. BSU subfamily. It depends on Mn(2+) as a cofactor. Expressed throughout the plant, with a higher level in younger parts.

The protein resides in the nucleus. The catalysed reaction is O-phospho-L-seryl-[protein] + H2O = L-seryl-[protein] + phosphate. It catalyses the reaction O-phospho-L-threonyl-[protein] + H2O = L-threonyl-[protein] + phosphate. In terms of biological role, phosphatase involved in elongation process, probably by acting as a regulator of brassinolide signaling. In Arabidopsis thaliana (Mouse-ear cress), this protein is Serine/threonine-protein phosphatase BSL3 (BSL3).